The sequence spans 67 residues: Large ribosomal subunit protein bL35 (67 aa).

Basic residues predominate over residues 1-16; that stretch reads MPKMKTKSSAKKRFRV. The segment at 1–23 is disordered; that stretch reads MPKMKTKSSAKKRFRVRPGGTVK.

The protein belongs to the bacterial ribosomal protein bL35 family.

This Variovorax paradoxus (strain S110) protein is Large ribosomal subunit protein bL35.